Consider the following 186-residue polypeptide: Catechol O-methyltransferase (186 aa).

S-adenosyl-L-methionine-binding positions include V7, E29, S37, E55, L56, 82–85 (GASQ), S84, and D106. D106 provides a ligand contact to Mg(2+). K109 contacts substrate. D134 and N135 together coordinate Mg(2+). Substrate is bound by residues N135 and E164. Position 182 is a phosphoserine (S182).

The protein belongs to the class I-like SAM-binding methyltransferase superfamily. Cation-dependent O-methyltransferase family. It depends on Mg(2+) as a cofactor.

Its subcellular location is the cytoplasm. It localises to the cell membrane. It catalyses the reaction a catechol + S-adenosyl-L-methionine = a guaiacol + S-adenosyl-L-homocysteine + H(+). The catalysed reaction is 2-hydroxyestrone + S-adenosyl-L-methionine = 2-hydroxy-3-methoxy-estrone + S-adenosyl-L-homocysteine + H(+). The enzyme catalyses 4-hydroxyestrone + S-adenosyl-L-methionine = 4-methoxyestrone + S-adenosyl-L-homocysteine + H(+). It carries out the reaction 2-hydroxyestrone + S-adenosyl-L-methionine = 2-methoxyestrone + S-adenosyl-L-homocysteine + H(+). It catalyses the reaction 4-hydroxy-17beta-estradiol + S-adenosyl-L-methionine = 4-methoxy-17beta-estradiol + S-adenosyl-L-homocysteine + H(+). The catalysed reaction is 2-hydroxy-17beta-estradiol + S-adenosyl-L-methionine = 2-hydroxy-3-methoxy-17beta-estradiol + S-adenosyl-L-homocysteine + H(+). The enzyme catalyses 2-hydroxy-17beta-estradiol + S-adenosyl-L-methionine = 2-methoxy-17beta-estradiol + S-adenosyl-L-homocysteine + H(+). Catalyzes the O-methylation, and thereby the inactivation, of catecholamine neurotransmitters and catechol hormones. Also shortens the biological half-lives of certain neuroactive drugs, like L-DOPA, alpha-methyl DOPA and isoproterenol. This chain is Catechol O-methyltransferase (COMT), found in Sus scrofa (Pig).